A 286-amino-acid polypeptide reads, in one-letter code: Light-independent protochlorophyllide reductase iron-sulfur ATP-binding protein (286 aa).

Residues 10–15 and lysine 39 contribute to the ATP site; that span reads GIGKST. Serine 14 is a Mg(2+) binding site. 2 residues coordinate [4Fe-4S] cluster: cysteine 95 and cysteine 129. 180–181 lines the ATP pocket; that stretch reads NR.

This sequence belongs to the NifH/BchL/ChlL family. In terms of assembly, homodimer. Protochlorophyllide reductase is composed of three subunits; ChlL, ChlN and ChlB. [4Fe-4S] cluster is required as a cofactor.

The catalysed reaction is chlorophyllide a + oxidized 2[4Fe-4S]-[ferredoxin] + 2 ADP + 2 phosphate = protochlorophyllide a + reduced 2[4Fe-4S]-[ferredoxin] + 2 ATP + 2 H2O. It participates in porphyrin-containing compound metabolism; chlorophyll biosynthesis (light-independent). Component of the dark-operative protochlorophyllide reductase (DPOR) that uses Mg-ATP and reduced ferredoxin to reduce ring D of protochlorophyllide (Pchlide) to form chlorophyllide a (Chlide). This reaction is light-independent. The L component serves as a unique electron donor to the NB-component of the complex, and binds Mg-ATP. The polypeptide is Light-independent protochlorophyllide reductase iron-sulfur ATP-binding protein (Cyanothece sp. (strain PCC 7425 / ATCC 29141)).